The chain runs to 172 residues: Large ribosomal subunit protein uL10 (172 aa).

It belongs to the universal ribosomal protein uL10 family. Part of the ribosomal stalk of the 50S ribosomal subunit. The N-terminus interacts with L11 and the large rRNA to form the base of the stalk. The C-terminus forms an elongated spine to which L12 dimers bind in a sequential fashion forming a multimeric L10(L12)X complex.

Functionally, forms part of the ribosomal stalk, playing a central role in the interaction of the ribosome with GTP-bound translation factors. The polypeptide is Large ribosomal subunit protein uL10 (Clostridium tetani (strain Massachusetts / E88)).